We begin with the raw amino-acid sequence, 431 residues long: Alpha-gurjunene synthase (431 aa).

Mg(2+)-binding residues include aspartate 126 and aspartate 130. Residue arginine 267 participates in (2E,6E)-farnesyl diphosphate binding. Mg(2+)-binding residues include asparagine 321 and serine 325. Lysine 328 contributes to the (2E,6E)-farnesyl diphosphate binding site. Residue glutamate 329 coordinates Mg(2+). (2E,6E)-farnesyl diphosphate is bound at residue 412–413 (RY).

This sequence belongs to the terpene synthase family. The cofactor is Mg(2+).

It catalyses the reaction (2E,6E)-farnesyl diphosphate = (-)-alpha-gurjunene + diphosphate. The catalysed reaction is (2E,6E)-farnesyl diphosphate + H2O = 5-hydroxy-alpha-gurjunene + diphosphate. It participates in secondary metabolite biosynthesis; terpenoid biosynthesis. Its function is as follows. Catalyzes the conversion of (2E,6E)-farnesyl diphosphate (FPP) into the sesquiterpene alcohols (-)-alpha-gurjunene and 5-hydroxy-alpha-gurjunene. Other unidentified sesquiterpene alcohols found to be catalyzed by MTPSL4 may arise from carbocation reaction intermediates along the catalytic cascade to gurjunene being quenched by a water molecule, yielding formation of the alcohols. The chain is Alpha-gurjunene synthase from Marchantia polymorpha (Common liverwort).